Here is a 375-residue protein sequence, read N- to C-terminus: Fructose-1,6-bisphosphate aldolase/phosphatase (375 aa).

The active-site Proton acceptor; for FBP phosphatase activity is the D15. Mg(2+) is bound by residues D15, H22, D56, and D57. H22 contributes to the beta-D-fructose 1,6-bisphosphate binding site. H22 is a binding site for dihydroxyacetone phosphate. Y94 serves as a coordination point for beta-D-fructose 1,6-bisphosphate. Q98 serves as a coordination point for Mg(2+). Residue G107–N108 participates in beta-D-fructose 1,6-bisphosphate binding. Residue D135 coordinates Mg(2+). Residue K136 coordinates beta-D-fructose 1,6-bisphosphate. K136 contributes to the dihydroxyacetone phosphate binding site. The active-site Proton donor/acceptor; for FBP aldolase activity is the Y237. Positions 240, 241, and 242 each coordinate Mg(2+). K240 (schiff-base intermediate with DHAP; for FBP aldolase activity) is an active-site residue. Residues Q250 to S251, R274, D295, and Y357 contribute to the beta-D-fructose 1,6-bisphosphate site. Residues R274 and D295 each coordinate dihydroxyacetone phosphate.

The protein belongs to the FBP aldolase/phosphatase family. Homooctamer; dimer of tetramers. Requires Mg(2+) as cofactor.

The catalysed reaction is beta-D-fructose 1,6-bisphosphate + H2O = beta-D-fructose 6-phosphate + phosphate. It carries out the reaction beta-D-fructose 1,6-bisphosphate = D-glyceraldehyde 3-phosphate + dihydroxyacetone phosphate. It participates in carbohydrate biosynthesis; gluconeogenesis. Its activity is regulated as follows. Activity is enhanced by dithioerythritol, and is slightly inhibited by fructose 2,6-bisphosphate. AMP does not inhibit the enzyme activity. Its function is as follows. Catalyzes two subsequent steps in gluconeogenesis: the aldol condensation of dihydroxyacetone phosphate (DHAP) and glyceraldehyde-3-phosphate (GA3P) to fructose-1,6-bisphosphate (FBP), and the dephosphorylation of FBP to fructose-6-phosphate (F6P). Does not display hydrolase activity against fructose 2,6-bisphosphate, fructose 6-phosphate, fructose 1-phosphate, glucose 6-phosphate, and glucose 1-phosphate. Exhibits only negligible activity on inositol-1-phosphate (IMP). Is essential for the growth of T.kodakaraensis under gluconeogenic conditions. The sequence is that of Fructose-1,6-bisphosphate aldolase/phosphatase from Thermococcus kodakarensis (strain ATCC BAA-918 / JCM 12380 / KOD1) (Pyrococcus kodakaraensis (strain KOD1)).